The following is a 944-amino-acid chain: MFQNSMKQRMTWEEFHGPNLGYVLELYDQYVKDPESLDADLKEMFDELGAPPGDIRAASQKNEEADFTAGSIQKIASAVKLAEDIRTYGHLNASVNPLRKTQEKQELFPLAEYGLTEQDVKKIPASVICKDAPKEVTNGLEAIQYLRNTYKKSISFEFDHVHIFEERNWLMKKIESGELFTPKSKEKLVEVLRRLTEVESLEQFLHKTFVGQKRFSIEGLDALVPMLDDIIAKSVSAGTTNVNIGMAHRGRLNVLAHVLGKPYEIIFSEFQHAPNKDLVPSEGSTGINYGWTGDVKYHLGANRQIQDEHTKTARIALANNPSHLEFIDPIVEGSTRAAQETRTESGYPVQDVKKSMAILIHGDAAFPGEGIVAETLNLSQLKGYQVGGAIHIIANNMIGFTTESNESRSTKYASDLAKGFEIPIVHVNADDPEACLSAVQLAVEYRMTFNKDFLIDLIGYRRFGHNEMDEPSATQPMLYDAVRKHPTVKNIFAEKLIHKGIVDKETVGKIKDAVQKRLEEAYRKVPAKKEDMTHEIVLPEPVSNGFPDVDTSVDFETLRKINQELVSWPENFNVFDKLKRILERRAKAFEDDRKVDWSLAEAMAFASILKDGTPLRLTGQDSERGTFAHRNLVLHDSKTGDEFIALHHLADTKASFAVHNSPLSEGSVLGFEYGYNVSSPETMVIWEAQFGDFANAAQVYFDQFISAGRAKWGQKSGLVVLLPHGYEGQGPEHSSGRTERFLQLAAENNWTVANLTSAAQYFHILRRQAKMLLREEIRPLIIMTPKSLLRNPNTVSEVQELSNSSFKPVYEMSGLSHQYDKVTRLVLSSGKVSIDISDHFNKMEGEKDWLHIARVEELYPFPAKHIKAIFSKLPNLEEIVWVQEEPQNMGAWNYIEPYLREVAPKDVKVRYIGRRRRSSPAEGDPTVHKKEQERIVSDSLTRKN.

The interval 914 to 944 (RRRRSSPAEGDPTVHKKEQERIVSDSLTRKN) is disordered. A compositionally biased stretch (basic and acidic residues) spans 925 to 936 (PTVHKKEQERIV).

Belongs to the alpha-ketoglutarate dehydrogenase family. In terms of assembly, homodimer. Part of the 2-oxoglutarate dehydrogenase (OGDH) complex composed of E1 (2-oxoglutarate dehydrogenase), E2 (dihydrolipoamide succinyltransferase) and E3 (dihydrolipoamide dehydrogenase); the complex contains multiple copies of the three enzymatic components (E1, E2 and E3). The cofactor is thiamine diphosphate.

The enzyme catalyses N(6)-[(R)-lipoyl]-L-lysyl-[protein] + 2-oxoglutarate + H(+) = N(6)-[(R)-S(8)-succinyldihydrolipoyl]-L-lysyl-[protein] + CO2. Functionally, E1 component of the 2-oxoglutarate dehydrogenase (OGDH) complex which catalyzes the decarboxylation of 2-oxoglutarate, the first step in the conversion of 2-oxoglutarate to succinyl-CoA and CO(2). The polypeptide is 2-oxoglutarate dehydrogenase E1 component (Bacillus licheniformis (strain ATCC 14580 / DSM 13 / JCM 2505 / CCUG 7422 / NBRC 12200 / NCIMB 9375 / NCTC 10341 / NRRL NRS-1264 / Gibson 46)).